The primary structure comprises 509 residues: ATP synthase subunit alpha (509 aa).

169–176 is an ATP binding site; the sequence is GDRQTGKT.

It belongs to the ATPase alpha/beta chains family. F-type ATPases have 2 components, CF(1) - the catalytic core - and CF(0) - the membrane proton channel. CF(1) has five subunits: alpha(3), beta(3), gamma(1), delta(1), epsilon(1). CF(0) has three main subunits: a(1), b(2) and c(9-12). The alpha and beta chains form an alternating ring which encloses part of the gamma chain. CF(1) is attached to CF(0) by a central stalk formed by the gamma and epsilon chains, while a peripheral stalk is formed by the delta and b chains.

The protein resides in the cell inner membrane. It catalyses the reaction ATP + H2O + 4 H(+)(in) = ADP + phosphate + 5 H(+)(out). Functionally, produces ATP from ADP in the presence of a proton gradient across the membrane. The alpha chain is a regulatory subunit. The chain is ATP synthase subunit alpha from Methylorubrum populi (strain ATCC BAA-705 / NCIMB 13946 / BJ001) (Methylobacterium populi).